A 205-amino-acid chain; its full sequence is SCO2-like protein RC0895 (205 aa).

Residues Cys82, Cys86, and His172 each contribute to the Cu cation site.

Belongs to the SCO1/2 family.

The polypeptide is SCO2-like protein RC0895 (Rickettsia conorii (strain ATCC VR-613 / Malish 7)).